The primary structure comprises 254 residues: 5-oxoprolinase subunit A (254 aa).

It belongs to the LamB/PxpA family. Forms a complex composed of PxpA, PxpB and PxpC.

The enzyme catalyses 5-oxo-L-proline + ATP + 2 H2O = L-glutamate + ADP + phosphate + H(+). Functionally, catalyzes the cleavage of 5-oxoproline to form L-glutamate coupled to the hydrolysis of ATP to ADP and inorganic phosphate. This Burkholderia mallei (strain NCTC 10247) protein is 5-oxoprolinase subunit A.